A 187-amino-acid chain; its full sequence is Calmodulin-like protein 1 (187 aa).

An N-acetylalanine modification is found at A2. EF-hand domains follow at residues 8-43, 44-79, 81-116, and 117-152; these read EQIG…LGQN, PTEA…KLRD, DSEE…IGER, and LTDE…KKRR. D21, D23, D25, S27, E32, D57, D59, N61, N63, E68, D94, D96, N98, E105, D130, D132, D134, Q136, and E141 together coordinate Ca(2+). The tract at residues 153 to 187 is disordered; it reads KRIEEKRDHDGGSRTKSAGPSAAPASKRGQKCVIL. A compositionally biased stretch (basic and acidic residues) spans 154-165; the sequence is RIEEKRDHDGGS. Over residues 169-178 the composition is skewed to low complexity; the sequence is SAGPSAAPAS. C184 is modified (cysteine methyl ester). A lipid anchor (S-farnesyl cysteine) is attached at C184. Positions 185 to 187 are cleaved as a propeptide — removed in mature form; sequence VIL.

Belongs to the calmodulin family.

The protein resides in the membrane. Its function is as follows. Calcium-binding protein that binds and activates CAMK1, a calcium/calmodulin-dependent kinase. This chain is Calmodulin-like protein 1 (CML1), found in Oryza sativa subsp. japonica (Rice).